The primary structure comprises 177 residues: Nuclear export protein (177 aa).

Short sequence motifs (nuclear export signal) lie at residues 91–100 and 117–127; these read LWLPMKSLSL and MKHQILTRLKL.

In terms of assembly, binds M1 protein. May interact with human nucleoporins and exportin XPO1/CRM1.

Its subcellular location is the virion. The protein localises to the host nucleus. Functionally, mediates the nuclear export of encapsidated genomic RNAs (ribonucleoproteins, RNPs). Acts as an adapter between viral RNPs complexes and the nuclear export machinery of the cell. Possesses no intrinsic RNA-binding activity, but includes a C-terminal M1-binding domain. This domain is believed to allow recognition of RNPs to which the M1 protein is bound. Because the M1 protein is not available in large quantities until the later stages of infection, such an indirect recognition mechanism probably ensures that genomic RNPs are not exported from the nucleus before sufficient quantities of viral mRNA and progeny genomic RNA have been synthesized. Furthermore, the RNPs enters the cytoplasm only when they have associated with the M1 protein that is necessary to guide them to the plasma membrane. May down-regulate viral RNA synthesis when overproduced. The sequence is that of Nuclear export protein (NS) from Homo sapiens (Human).